The chain runs to 245 residues: 1-(5-phosphoribosyl)-5-[(5-phosphoribosylamino)methylideneamino] imidazole-4-carboxamide isomerase (245 aa).

Catalysis depends on aspartate 15, which acts as the Proton acceptor. Residue aspartate 135 is the Proton donor of the active site.

It belongs to the HisA/HisF family.

It localises to the cytoplasm. The catalysed reaction is 1-(5-phospho-beta-D-ribosyl)-5-[(5-phospho-beta-D-ribosylamino)methylideneamino]imidazole-4-carboxamide = 5-[(5-phospho-1-deoxy-D-ribulos-1-ylimino)methylamino]-1-(5-phospho-beta-D-ribosyl)imidazole-4-carboxamide. Its pathway is amino-acid biosynthesis; L-histidine biosynthesis; L-histidine from 5-phospho-alpha-D-ribose 1-diphosphate: step 4/9. This Haloquadratum walsbyi (strain DSM 16790 / HBSQ001) protein is 1-(5-phosphoribosyl)-5-[(5-phosphoribosylamino)methylideneamino] imidazole-4-carboxamide isomerase.